We begin with the raw amino-acid sequence, 181 residues long: Ferritin heavy chain (181 aa).

Met1 carries the post-translational modification N-acetylmethionine. Position 2 is an N-acetylthreonine; in Ferritin heavy chain, N-terminally processed (Thr2). Residues 11-160 (QNYHQDSEAA…DHITNLRKMG (150 aa)) enclose the Ferritin-like diiron domain. Fe cation is bound by residues Glu28, Glu63, His66, Glu108, and Gln142. Ser179 is subject to Phosphoserine.

Belongs to the ferritin family. In terms of assembly, oligomer of 24 subunits. There are two types of subunits: L (light) chain and H (heavy) chain. The major chain can be light or heavy, depending on the species and tissue type. The functional molecule forms a roughly spherical shell with a diameter of 12 nm and contains a central cavity into which the insoluble mineral iron core is deposited. Interacts with NCOA4; NCOA4 promotes targeting of the iron-binding ferritin complex to autolysosomes following starvation or iron depletion.

It localises to the cytoplasm. Its subcellular location is the lysosome. The protein resides in the cytoplasmic vesicle. It is found in the autophagosome. The catalysed reaction is 4 Fe(2+) + O2 + 4 H(+) = 4 Fe(3+) + 2 H2O. In terms of biological role, stores iron in a soluble, non-toxic, readily available form. Important for iron homeostasis. Has ferroxidase activity. Iron is taken up in the ferrous form and deposited as ferric hydroxides after oxidation. Also plays a role in delivery of iron to cells. Mediates iron uptake in capsule cells of the developing kidney. Delivery to lysosomes is mediated by the cargo receptor NCOA4 for autophagic degradation and release of iron. The chain is Ferritin heavy chain (FTH1) from Bos taurus (Bovine).